The primary structure comprises 456 residues: Transcription factor tau subunit sfc1 (456 aa).

2 disordered regions span residues 394 to 416 (DRYS…GLNT) and 437 to 456 (HEGF…IFGD). A compositionally biased stretch (polar residues) spans 407–416 (LNDTVRGLNT). Acidic residues predominate over residues 441 to 456 (EDLEEIDDDYDDIFGD).

As to quaternary structure, component of the TFIIIC complex including sfc1, sfc3, sfc4, sfc6 and sfc7. The subunits are organized in two globular domains, tauA and tauB, connected by a proteolysis-sensitive and flexible linker. Interacts with sfc3, sfc4 and sfc6. Phosphorylated.

It localises to the nucleus. In terms of biological role, TFIIIC mediates tRNA and 5S RNA gene activation by binding to intragenic promoter elements. Upstream of the transcription start site, TFIIIC assembles the initiation complex TFIIIB-TFIIIC-tDNA, which is sufficient for RNA polymerase III recruitment and function. Part of the tauA domain of TFIIIC that binds boxA DNA promoter sites of tRNA and similar genes. Participates in the interconnection of tauA with tauB via its contacts with sfc3 and sfc6. Serves as a scaffold critical for tauA-DNA spatial configuration and tauB-DNA stability. Localizes to chromatin insulator sequence without recruiting RNA polymerase III and plays a role in nuclear organization. In Schizosaccharomyces pombe (strain 972 / ATCC 24843) (Fission yeast), this protein is Transcription factor tau subunit sfc1 (sfc1).